Here is a 366-residue protein sequence, read N- to C-terminus: NADH-quinone oxidoreductase subunit D (366 aa).

The protein belongs to the complex I 49 kDa subunit family. In terms of assembly, NDH-1 is composed of 14 different subunits. Subunits NuoB, C, D, E, F, and G constitute the peripheral sector of the complex.

It is found in the cell membrane. It carries out the reaction a quinone + NADH + 5 H(+)(in) = a quinol + NAD(+) + 4 H(+)(out). In terms of biological role, NDH-1 shuttles electrons from NADH, via FMN and iron-sulfur (Fe-S) centers, to quinones in the respiratory chain. The immediate electron acceptor for the enzyme in this species is believed to be a menaquinone. Couples the redox reaction to proton translocation (for every two electrons transferred, four hydrogen ions are translocated across the cytoplasmic membrane), and thus conserves the redox energy in a proton gradient. The sequence is that of NADH-quinone oxidoreductase subunit D from Bacillus mycoides (strain KBAB4) (Bacillus weihenstephanensis).